Here is a 91-residue protein sequence, read N- to C-terminus: Small ribosomal subunit protein uS19 (91 aa).

Belongs to the universal ribosomal protein uS19 family.

In terms of biological role, protein S19 forms a complex with S13 that binds strongly to the 16S ribosomal RNA. The chain is Small ribosomal subunit protein uS19 from Bordetella petrii (strain ATCC BAA-461 / DSM 12804 / CCUG 43448).